Consider the following 241-residue polypeptide: Zinc finger CCHC domain-containing protein 24 (241 aa).

Residues Ser65 and Ser93 each carry the phosphoserine modification. Residues 132–149 (YLCHLCFNKGHYIKDCPQ) form a CCHC-type zinc finger.

This is Zinc finger CCHC domain-containing protein 24 from Mus musculus (Mouse).